Consider the following 427-residue polypeptide: Serine--tRNA ligase (427 aa).

An L-serine-binding site is contributed by 232 to 234 (TAE). Residue 263–265 (RSE) participates in ATP binding. Residue Glu286 participates in L-serine binding. Position 350–353 (350–353 (EISS)) interacts with ATP. Residue Ser385 coordinates L-serine.

The protein belongs to the class-II aminoacyl-tRNA synthetase family. Type-1 seryl-tRNA synthetase subfamily. As to quaternary structure, homodimer. The tRNA molecule binds across the dimer.

The protein resides in the cytoplasm. It catalyses the reaction tRNA(Ser) + L-serine + ATP = L-seryl-tRNA(Ser) + AMP + diphosphate + H(+). It carries out the reaction tRNA(Sec) + L-serine + ATP = L-seryl-tRNA(Sec) + AMP + diphosphate + H(+). Its pathway is aminoacyl-tRNA biosynthesis; selenocysteinyl-tRNA(Sec) biosynthesis; L-seryl-tRNA(Sec) from L-serine and tRNA(Sec): step 1/1. Its function is as follows. Catalyzes the attachment of serine to tRNA(Ser). Is also able to aminoacylate tRNA(Sec) with serine, to form the misacylated tRNA L-seryl-tRNA(Sec), which will be further converted into selenocysteinyl-tRNA(Sec). In Lacticaseibacillus paracasei (strain ATCC 334 / BCRC 17002 / CCUG 31169 / CIP 107868 / KCTC 3260 / NRRL B-441) (Lactobacillus paracasei), this protein is Serine--tRNA ligase.